The sequence spans 208 residues: Granulocyte colony-stimulating factor (208 aa).

Residues 1 to 30 (MAQLSAQRRMKLMALQLLLWQSALWSGREA) form the signal peptide. 2 cysteine pairs are disulfide-bonded: Cys72/Cys78 and Cys100/Cys110. O-linked (GalNAc...) threonine glycosylation is present at Thr169.

This sequence belongs to the IL-6 superfamily. Monomer. O-glycosylated.

Its subcellular location is the secreted. Granulocyte/macrophage colony-stimulating factors are cytokines that act in hematopoiesis by controlling the production, differentiation, and function of 2 related white cell populations of the blood, the granulocytes and the monocytes-macrophages. This CSF induces granulocytes. In Mus musculus (Mouse), this protein is Granulocyte colony-stimulating factor (Csf3).